The following is a 365-amino-acid chain: Uroporphyrinogen decarboxylase (365 aa).

Residues 27-31, Asp77, Tyr154, Thr209, and His327 each bind substrate; that span reads RQAGR.

Belongs to the uroporphyrinogen decarboxylase family. In terms of assembly, homodimer.

The protein resides in the cytoplasm. It catalyses the reaction uroporphyrinogen III + 4 H(+) = coproporphyrinogen III + 4 CO2. Its pathway is porphyrin-containing compound metabolism; protoporphyrin-IX biosynthesis; coproporphyrinogen-III from 5-aminolevulinate: step 4/4. Its function is as follows. Catalyzes the decarboxylation of four acetate groups of uroporphyrinogen-III to yield coproporphyrinogen-III. This chain is Uroporphyrinogen decarboxylase, found in Nitrosospira multiformis (strain ATCC 25196 / NCIMB 11849 / C 71).